The chain runs to 310 residues: p-hydroxybenzoic acid efflux pump subunit AaeA (310 aa).

Residues 12–32 (VITLLLVIIAIVLIFRIWVFY) form a helical membrane-spanning segment.

Belongs to the membrane fusion protein (MFP) (TC 8.A.1) family.

The protein localises to the cell inner membrane. In terms of biological role, forms an efflux pump with AaeB. This is p-hydroxybenzoic acid efflux pump subunit AaeA from Erwinia tasmaniensis (strain DSM 17950 / CFBP 7177 / CIP 109463 / NCPPB 4357 / Et1/99).